We begin with the raw amino-acid sequence, 21 residues long: LKVPDLPLPESYXXALNLAXD.

In terms of tissue distribution, expressed by the venom gland.

It is found in the secreted. This Scolopendra viridicornis nigra (Brazilian giant centipede) protein is Scolopendra 7997.01 Da toxin.